The sequence spans 649 residues: MFDQIPTQRPNTPLLDVVDTPARLRELSEKQLPQLAKELREYLLYTVGQTGGHFGAGLGVVELTVALHYVLNTPDDRLVWDVGHQTYPHKILTGRREQMSSIRQLDGLSGFPKRSESEFDTFGVGHSSTSISAALGMALAAEMTDNQQQTVAVIGDGSMTAGMAFEALNHAAHADTNMMVILNDNNMSISKNVGGLANYFSKIWASKTYCALREGSKRVLTKIPQAWELARKTEEHMKGMVSPGTLFEELGFYYVGPIDGHDLERLVHDIRNMLAIPGPKLLHIITQKGKGFTPAEKDPVGYHALNKIEPKASITPISASGGAEAPAASTIKKPKYQTVFGDWLCDLAEVDPFVLGITPAMCDGSGMVEFAERFPDRFHDVAIAEQHAVTLAAGLACEKFKPVVAIYSTFLQRAYDQLVHDVALQNLDVTFAIDRAGLVGEDGPTHAGAFDISFLRCIPKIIIATPSDENECRQLLFSAYHHPGAAAVRYPRGTGPGAVIELENQHWPIGKGRELRQGKTVCFINFGVLLPDAIAVAEANNYGVCDMRWAKPLDKDLLLNMAEQYDYLVTLEENAVAGGAGAGVMELLAAEGISTPVLPLGLPDEYLDHGKRSQLLQAAGLDRASINQRINQWLSRHNGAAHDSQIHSL.

Thiamine diphosphate is bound by residues H84 and 125-127 (GHS). Mg(2+) is bound at residue D156. Residues 157-158 (GS), N185, F292, and E385 contribute to the thiamine diphosphate site. N185 contributes to the Mg(2+) binding site.

This sequence belongs to the transketolase family. DXPS subfamily. In terms of assembly, homodimer. Mg(2+) is required as a cofactor. Thiamine diphosphate serves as cofactor.

It carries out the reaction D-glyceraldehyde 3-phosphate + pyruvate + H(+) = 1-deoxy-D-xylulose 5-phosphate + CO2. The protein operates within metabolic intermediate biosynthesis; 1-deoxy-D-xylulose 5-phosphate biosynthesis; 1-deoxy-D-xylulose 5-phosphate from D-glyceraldehyde 3-phosphate and pyruvate: step 1/1. Its function is as follows. Catalyzes the acyloin condensation reaction between C atoms 2 and 3 of pyruvate and glyceraldehyde 3-phosphate to yield 1-deoxy-D-xylulose-5-phosphate (DXP). The chain is 1-deoxy-D-xylulose-5-phosphate synthase from Saccharophagus degradans (strain 2-40 / ATCC 43961 / DSM 17024).